The sequence spans 286 residues: ATP synthase gamma chain (286 aa).

Belongs to the ATPase gamma chain family. As to quaternary structure, F-type ATPases have 2 components, CF(1) - the catalytic core - and CF(0) - the membrane proton channel. CF(1) has five subunits: alpha(3), beta(3), gamma(1), delta(1), epsilon(1). CF(0) has three main subunits: a, b and c.

It localises to the cell inner membrane. In terms of biological role, produces ATP from ADP in the presence of a proton gradient across the membrane. The gamma chain is believed to be important in regulating ATPase activity and the flow of protons through the CF(0) complex. This Shewanella putrefaciens (strain CN-32 / ATCC BAA-453) protein is ATP synthase gamma chain.